Consider the following 287-residue polypeptide: CBK1 kinase activator protein MOB2 (287 aa).

A disordered region spans residues 1–89 (MSFFNFKAFG…QQQEASERSE (89 aa)). Phosphotyrosine is present on Tyr-33. The span at 34–44 (SSPHSSNSRLS) shows a compositional bias: low complexity. Over residues 45-56 (LRNKHHSPKRHS) the composition is skewed to basic residues. At Ser-59 the chain carries Phosphoserine. A compositionally biased stretch (low complexity) spans 63 to 83 (QKSTPQSQQLTSTTPQSQQQE). The residue at position 76 (Thr-76) is a Phosphothreonine.

This sequence belongs to the MOB1/phocein family. In terms of assembly, interacts with protein kinase CBK1 to form the RAM CBK1-MOB2 kinase complex.

It localises to the nucleus. Its subcellular location is the cytoplasm. Functions as an activator subunit for the CBK1 protein kinase. Part of the regulation of ACE2 activity and cellular morphogenesis (RAM) signaling network. Required for coordinating polarized cell growth during interphase with the onset of mitosis. Required for mother/daughter cell separation after cytokinesis. Also has a role in the prevention of nuclear export of ACE2 from the daughter cell nucleus after mitotic exit. It coordinates ACE2-dependent transcription with mitotic exit network activation. The sequence is that of CBK1 kinase activator protein MOB2 (MOB2) from Saccharomyces cerevisiae (strain ATCC 204508 / S288c) (Baker's yeast).